A 380-amino-acid chain; its full sequence is Tryptophan 2,3-dioxygenase (380 aa).

Substrate is bound by residues 57–61 (FIITH) and Arg-128. Position 313 (His-313) interacts with heme. Thr-328 is a binding site for substrate.

The protein belongs to the tryptophan 2,3-dioxygenase family. As to quaternary structure, homotetramer. Dimer of dimers. Heme is required as a cofactor.

The catalysed reaction is L-tryptophan + O2 = N-formyl-L-kynurenine. Its pathway is amino-acid degradation; L-tryptophan degradation via kynurenine pathway; L-kynurenine from L-tryptophan: step 1/2. It functions in the pathway pigment biosynthesis; ommochrome biosynthesis. Its function is as follows. Heme-dependent dioxygenase that catalyzes the oxidative cleavage of the L-tryptophan (L-Trp) pyrrole ring and converts L-tryptophan to N-formyl-L-kynurenine. Catalyzes the oxidative cleavage of the indole moiety. In Drosophila ananassae (Fruit fly), this protein is Tryptophan 2,3-dioxygenase.